The following is a 421-amino-acid chain: Serine hydroxymethyltransferase (421 aa).

Residues leucine 121 and 125–127 (GHL) contribute to the (6S)-5,6,7,8-tetrahydrofolate site. Position 229 is an N6-(pyridoxal phosphate)lysine (lysine 229).

Belongs to the SHMT family. In terms of assembly, homodimer. Requires pyridoxal 5'-phosphate as cofactor.

Its subcellular location is the cytoplasm. The enzyme catalyses (6R)-5,10-methylene-5,6,7,8-tetrahydrofolate + glycine + H2O = (6S)-5,6,7,8-tetrahydrofolate + L-serine. It functions in the pathway one-carbon metabolism; tetrahydrofolate interconversion. Its pathway is amino-acid biosynthesis; glycine biosynthesis; glycine from L-serine: step 1/1. Functionally, catalyzes the reversible interconversion of serine and glycine with tetrahydrofolate (THF) serving as the one-carbon carrier. This reaction serves as the major source of one-carbon groups required for the biosynthesis of purines, thymidylate, methionine, and other important biomolecules. Also exhibits THF-independent aldolase activity toward beta-hydroxyamino acids, producing glycine and aldehydes, via a retro-aldol mechanism. In Actinobacillus pleuropneumoniae serotype 7 (strain AP76), this protein is Serine hydroxymethyltransferase.